The following is a 122-amino-acid chain: Large ribosomal subunit protein uL14 (122 aa).

Belongs to the universal ribosomal protein uL14 family. Part of the 50S ribosomal subunit. Forms a cluster with proteins L3 and L19. In the 70S ribosome, L14 and L19 interact and together make contacts with the 16S rRNA in bridges B5 and B8.

In terms of biological role, binds to 23S rRNA. Forms part of two intersubunit bridges in the 70S ribosome. This is Large ribosomal subunit protein uL14 from Clostridium kluyveri (strain ATCC 8527 / DSM 555 / NBRC 12016 / NCIMB 10680 / K1).